The sequence spans 761 residues: Phosphoribosylformylglycinamidine synthase subunit PurL (761 aa).

The active site involves His-58. Residues Tyr-61 and Lys-105 each contribute to the ATP site. Mg(2+) is bound at residue Glu-107. Substrate contacts are provided by residues 108 to 111 (SHNH) and Arg-130. His-109 acts as the Proton acceptor in catalysis. A Mg(2+)-binding site is contributed by Asp-131. Gln-259 is a substrate binding site. Asp-287 serves as a coordination point for Mg(2+). 331 to 333 (ESQ) serves as a coordination point for substrate. Residues Asn-519 and Gly-556 each coordinate ATP. Asn-557 is a Mg(2+) binding site. Substrate is bound at residue Ser-559.

Belongs to the FGAMS family. Monomer. Part of the FGAM synthase complex composed of 1 PurL, 1 PurQ and 2 PurS subunits.

The protein resides in the cytoplasm. It catalyses the reaction N(2)-formyl-N(1)-(5-phospho-beta-D-ribosyl)glycinamide + L-glutamine + ATP + H2O = 2-formamido-N(1)-(5-O-phospho-beta-D-ribosyl)acetamidine + L-glutamate + ADP + phosphate + H(+). The protein operates within purine metabolism; IMP biosynthesis via de novo pathway; 5-amino-1-(5-phospho-D-ribosyl)imidazole from N(2)-formyl-N(1)-(5-phospho-D-ribosyl)glycinamide: step 1/2. In terms of biological role, part of the phosphoribosylformylglycinamidine synthase complex involved in the purines biosynthetic pathway. Catalyzes the ATP-dependent conversion of formylglycinamide ribonucleotide (FGAR) and glutamine to yield formylglycinamidine ribonucleotide (FGAM) and glutamate. The FGAM synthase complex is composed of three subunits. PurQ produces an ammonia molecule by converting glutamine to glutamate. PurL transfers the ammonia molecule to FGAR to form FGAM in an ATP-dependent manner. PurS interacts with PurQ and PurL and is thought to assist in the transfer of the ammonia molecule from PurQ to PurL. The protein is Phosphoribosylformylglycinamidine synthase subunit PurL of Rhodococcus jostii (strain RHA1).